Reading from the N-terminus, the 142-residue chain is Putative pre-16S rRNA nuclease (142 aa).

It belongs to the YqgF nuclease family.

It is found in the cytoplasm. In terms of biological role, could be a nuclease involved in processing of the 5'-end of pre-16S rRNA. The sequence is that of Putative pre-16S rRNA nuclease from Prosthecochloris aestuarii (strain DSM 271 / SK 413).